A 186-amino-acid polypeptide reads, in one-letter code: Peptidyl-tRNA hydrolase (186 aa).

Y14 provides a ligand contact to tRNA. The Proton acceptor role is filled by H19. 3 residues coordinate tRNA: Y64, N66, and N112.

It belongs to the PTH family. As to quaternary structure, monomer.

It is found in the cytoplasm. It carries out the reaction an N-acyl-L-alpha-aminoacyl-tRNA + H2O = an N-acyl-L-amino acid + a tRNA + H(+). In terms of biological role, hydrolyzes ribosome-free peptidyl-tRNAs (with 1 or more amino acids incorporated), which drop off the ribosome during protein synthesis, or as a result of ribosome stalling. Catalyzes the release of premature peptidyl moieties from peptidyl-tRNA molecules trapped in stalled 50S ribosomal subunits, and thus maintains levels of free tRNAs and 50S ribosomes. The chain is Peptidyl-tRNA hydrolase from Lachnospira eligens (strain ATCC 27750 / DSM 3376 / VPI C15-48 / C15-B4) (Eubacterium eligens).